A 510-amino-acid chain; its full sequence is DNA nucleotidylexotransferase (510 aa).

The segment at 1–22 (MDPLQAVHLGPRKKRPRQLGTP) is disordered. The Nuclear localization signal signature appears at 11–17 (PRKKRPR). Residues 27 to 124 (PYDIRFRDLV…KPVEMMGRHQ (98 aa)) enclose the BRCT domain. Position 134 is a phosphoserine (Ser-134). Positions 151–510 (SQYACQRRTT…DYIEPWERNA (360 aa)) are mediates interaction with DNTTIP2. An involved in DNA binding region spans residues 258 to 262 (VGLKT). Residues 333–338 (GFRRGK) and 342–345 (HDVD) each bind a 2'-deoxyribonucleoside 5'-triphosphate. Mg(2+) contacts are provided by Asp-343, Asp-345, and Asp-434. Residue 449–450 (GW) coordinates a 2'-deoxyribonucleoside 5'-triphosphate.

This sequence belongs to the DNA polymerase type-X family. Interacts with PRP19 and DNTTIP1. Forms a ternary complex with DNTTIP2 and core histone. Released from this complex by PCNA. Interacts with TRERF1. Requires Mg(2+) as cofactor. Isoform TDT-L: Expressed in the thymus, and, at lower levels, in the bone marrow. Detected in both cycling and noncycling pro-B and pre-B cells (at protein level). Isoform TDT-S: Expressed in both cycling and noncycling pro-B, but not pre-B, cells (at protein level). Not detected in mature peripheral or germinal center B cells.

Its subcellular location is the nucleus. It localises to the cytoplasm. The catalysed reaction is DNA(n) + a 2'-deoxyribonucleoside 5'-triphosphate = DNA(n+1) + diphosphate. Transferase that catalyzes the nontemplated addition of nucleoside triphosphate to coding ends during V(D)J recombination (N addition). Involved in the generation of diversity in the antigen-binding region of immunoglobulin heavy and light chains and T-cell receptors during B- and T-cell development. Does not act on double-stranded DNA with blunt ends. Functionally, 3'-to-5' DNA exonuclease. Involved in the generation of diversity in the antigen-binding region of immunoglobulin heavy and light chains and T-cell receptors during B- and T-cell development. Acts on single-stranded and double-stranded DNA with 3' or 5' extensions, but not on double-stranded DNA with blunt ends. Attenuates not only isoform TDT-S-catalyzed N addition, but also P (palindromic) addition in coding joins. Lacks terminal transferase activity. In Mus musculus (Mouse), this protein is DNA nucleotidylexotransferase (Dntt).